Here is a 128-residue protein sequence, read N- to C-terminus: Large ribosomal subunit protein uL22 (128 aa).

Positions M1–S22 are disordered. Residues I9 to P21 show a composition bias toward basic and acidic residues.

Belongs to the universal ribosomal protein uL22 family. Part of the 50S ribosomal subunit.

In terms of biological role, this protein binds specifically to 23S rRNA; its binding is stimulated by other ribosomal proteins, e.g. L4, L17, and L20. It is important during the early stages of 50S assembly. It makes multiple contacts with different domains of the 23S rRNA in the assembled 50S subunit and ribosome. Functionally, the globular domain of the protein is located near the polypeptide exit tunnel on the outside of the subunit, while an extended beta-hairpin is found that lines the wall of the exit tunnel in the center of the 70S ribosome. This chain is Large ribosomal subunit protein uL22, found in Lachnoclostridium phytofermentans (strain ATCC 700394 / DSM 18823 / ISDg) (Clostridium phytofermentans).